Reading from the N-terminus, the 27-residue chain is Caerulein precursor fragment R2 (27 aa).

Expressed by the skin glands.

Its subcellular location is the secreted. Its function is as follows. Antimicrobial peptide. In Xenopus ruwenzoriensis (Uganda clawed frog), this protein is Caerulein precursor fragment R2.